A 181-amino-acid polypeptide reads, in one-letter code: Large ribosomal subunit protein uL10 (181 aa).

This sequence belongs to the universal ribosomal protein uL10 family. In terms of assembly, part of the ribosomal stalk of the 50S ribosomal subunit. The N-terminus interacts with L11 and the large rRNA to form the base of the stalk. The C-terminus forms an elongated spine to which L12 dimers bind in a sequential fashion forming a multimeric L10(L12)X complex.

Functionally, forms part of the ribosomal stalk, playing a central role in the interaction of the ribosome with GTP-bound translation factors. The protein is Large ribosomal subunit protein uL10 of Nostoc sp. (strain PCC 7120 / SAG 25.82 / UTEX 2576).